A 309-amino-acid polypeptide reads, in one-letter code: Ribosomal RNA small subunit methyltransferase H (309 aa).

S-adenosyl-L-methionine contacts are provided by residues 36–38, aspartate 55, phenylalanine 81, aspartate 102, and glutamine 109; that span reads AGH.

Belongs to the methyltransferase superfamily. RsmH family.

It is found in the cytoplasm. It catalyses the reaction cytidine(1402) in 16S rRNA + S-adenosyl-L-methionine = N(4)-methylcytidine(1402) in 16S rRNA + S-adenosyl-L-homocysteine + H(+). Specifically methylates the N4 position of cytidine in position 1402 (C1402) of 16S rRNA. In Mycoplasma genitalium (strain ATCC 33530 / DSM 19775 / NCTC 10195 / G37) (Mycoplasmoides genitalium), this protein is Ribosomal RNA small subunit methyltransferase H.